A 333-amino-acid chain; its full sequence is Adenosine deaminase (333 aa).

Zn(2+) contacts are provided by His-12 and His-14. Substrate contacts are provided by His-14, Asp-16, and Gly-170. Zn(2+) is bound at residue His-197. Catalysis depends on Glu-200, which acts as the Proton donor. Asp-278 contributes to the Zn(2+) binding site. Asp-279 serves as a coordination point for substrate.

The protein belongs to the metallo-dependent hydrolases superfamily. Adenosine and AMP deaminases family. Adenosine deaminase subfamily. Requires Zn(2+) as cofactor.

The catalysed reaction is adenosine + H2O + H(+) = inosine + NH4(+). It catalyses the reaction 2'-deoxyadenosine + H2O + H(+) = 2'-deoxyinosine + NH4(+). Functionally, catalyzes the hydrolytic deamination of adenosine and 2-deoxyadenosine. The sequence is that of Adenosine deaminase from Salmonella gallinarum (strain 287/91 / NCTC 13346).